A 358-amino-acid polypeptide reads, in one-letter code: Photosystem II protein D1 2 (358 aa).

Helical transmembrane passes span 28-45, 117-132, and 141-155; these read YVGW…AATI, HFLI…QWEL, and WICV…AAMA. Chlorophyll a is bound at residue His117. Tyr125 serves as a coordination point for pheophytin a. [CaMn4O5] cluster contacts are provided by Asp169 and Glu188. Residues 196 to 217 form a helical membrane-spanning segment; the sequence is FHMLGVAGVFGGSLFSAMHGSL. Chlorophyll a is bound at residue His197. Residues His214 and 263–264 each bind a quinone; that span reads SF. Fe cation is bound at residue His214. His271 serves as a coordination point for Fe cation. The chain crosses the membrane as a helical span at residues 273–287; it reads FLGAWPVVGIWFTSM. [CaMn4O5] cluster-binding residues include His331, Glu332, Asp341, and Ala343. A propeptide spanning residues 344–358 is cleaved from the precursor; the sequence is AAESTPVALQAPAIG.

This sequence belongs to the reaction center PufL/M/PsbA/D family. As to quaternary structure, PSII is composed of 1 copy each of membrane proteins PsbA, PsbB, PsbC, PsbD, PsbE, PsbF, PsbH, PsbI, PsbJ, PsbK, PsbL, PsbM, PsbT, PsbX, PsbY, PsbZ, Psb30/Ycf12, peripheral proteins PsbO, CyanoQ (PsbQ), PsbU, PsbV and a large number of cofactors. It forms dimeric complexes. Requires The D1/D2 heterodimer binds P680, chlorophylls that are the primary electron donor of PSII, and subsequent electron acceptors. It shares a non-heme iron and each subunit binds pheophytin, quinone, additional chlorophylls, carotenoids and lipids. D1 provides most of the ligands for the Mn4-Ca-O5 cluster of the oxygen-evolving complex (OEC). There is also a Cl(-1) ion associated with D1 and D2, which is required for oxygen evolution. The PSII complex binds additional chlorophylls, carotenoids and specific lipids. as cofactor. Tyr-160 forms a radical intermediate that is referred to as redox-active TyrZ, YZ or Y-Z. Post-translationally, C-terminally processed by CtpA; processing is essential to allow assembly of the oxygen-evolving complex and thus photosynthetic growth.

Its subcellular location is the cellular thylakoid membrane. It carries out the reaction 2 a plastoquinone + 4 hnu + 2 H2O = 2 a plastoquinol + O2. Functionally, photosystem II (PSII) is a light-driven water:plastoquinone oxidoreductase that uses light energy to abstract electrons from H(2)O, generating O(2) and a proton gradient subsequently used for ATP formation. It consists of a core antenna complex that captures photons, and an electron transfer chain that converts photonic excitation into a charge separation. The D1/D2 (PsbA/PsbD) reaction center heterodimer binds P680, the primary electron donor of PSII as well as several subsequent electron acceptors. In Synechococcus sp. (strain CC9605), this protein is Photosystem II protein D1 2.